Reading from the N-terminus, the 269-residue chain is uncharacterized protein (269 aa).

103–110 is an ATP binding site; that stretch reads GIFTMGKS.

This is an uncharacterized protein from Mycoplasma pneumoniae (strain ATCC 29342 / M129 / Subtype 1) (Mycoplasmoides pneumoniae).